The sequence spans 262 residues: GTP cyclohydrolase 1 type 2 homolog (262 aa).

Residues histidine 68, histidine 69, aspartate 108, histidine 226, and glutamate 229 each contribute to the a divalent metal cation site.

Belongs to the GTP cyclohydrolase I type 2/NIF3 family. As to quaternary structure, homohexamer.

The polypeptide is GTP cyclohydrolase 1 type 2 homolog (Ureaplasma parvum serovar 3 (strain ATCC 700970)).